We begin with the raw amino-acid sequence, 175 residues long: DELTA-stichotoxin-She4b (175 aa).

The tract at residues 1–10 is plays an important role in the hemolytic activity; that stretch reads ALAGTIIAGA. The N-terminal region stretch occupies residues 9–28; it reads GASLTFQVLDKVLEELGKVS. Positions 52, 85, 103, 105, 131, 135, and 136 each coordinate phosphocholine. The segment at 103–118 is trp-rich region, which is important for the binding to lipid membrane; sequence SVPFDYNWYSNWWDVK. The Cell attachment site, crucial for protein stability signature appears at 141–143; that stretch reads RGD.

As to quaternary structure, octamer or nonamer in membranes. Monomer in the soluble state. Originally described as forming tetramer in the presence of a lipidic interface. Expressed in tentacles and mesenteric filaments.

The protein resides in the secreted. The protein localises to the nematocyst. It is found in the target cell membrane. In terms of biological role, pore-forming protein that forms cations-selective hydrophilic pores of around 1 nm and causes cardiac stimulation and cytolysis. Pore formation is a multi-step process that involves specific recognition of membrane sphingomyelin (but neither cholesterol nor phosphatidylcholine) using aromatic rich region and adjacent phosphocholine (POC) binding site, firm binding to the membrane (mainly driven by hydrophobic interactions) accompanied by the transfer of the N-terminal region to the lipid-water interface and finally pore formation after oligomerization of monomers. Cytolytic effects include red blood cells hemolysis, platelet aggregation and lysis, cytotoxic and cytostatic effects on fibroblasts. Lethality in mammals has been ascribed to severe vasospasm of coronary vessels, cardiac arrhythmia, and inotropic effects. The sequence is that of DELTA-stichotoxin-She4b from Stichodactyla helianthus (Sun anemone).